We begin with the raw amino-acid sequence, 253 residues long: Large ribosomal subunit protein bL28m (253 aa).

The N-terminal 55 residues, 1–55 (MPLHKYPPALWDVLKLKDGIYARLPEHYRRSLLEKHKPYPVHWKPHGLKYRLNPK), are a transit peptide targeting the mitochondrion.

This sequence belongs to the bacterial ribosomal protein bL28 family. Component of the mitochondrial ribosome large subunit (39S) which comprises a 16S rRNA and about 50 distinct proteins.

The protein resides in the mitochondrion. The protein is Large ribosomal subunit protein bL28m (mrpl28) of Xenopus laevis (African clawed frog).